Reading from the N-terminus, the 189-residue chain is Segregation and condensation protein B (189 aa).

This sequence belongs to the ScpB family. Homodimer. Homodimerization may be required to stabilize the binding of ScpA to the Smc head domains. Component of a cohesin-like complex composed of ScpA, ScpB and the Smc homodimer, in which ScpA and ScpB bind to the head domain of Smc. The presence of the three proteins is required for the association of the complex with DNA.

The protein localises to the cytoplasm. Participates in chromosomal partition during cell division. May act via the formation of a condensin-like complex containing Smc and ScpA that pull DNA away from mid-cell into both cell halves. The chain is Segregation and condensation protein B from Streptococcus mitis.